The chain runs to 344 residues: Ferrochelatase (344 aa).

Fe cation-binding residues include H214 and E295.

It belongs to the ferrochelatase family.

It localises to the cytoplasm. The catalysed reaction is heme b + 2 H(+) = protoporphyrin IX + Fe(2+). It functions in the pathway porphyrin-containing compound metabolism; protoheme biosynthesis; protoheme from protoporphyrin-IX: step 1/1. Functionally, catalyzes the ferrous insertion into protoporphyrin IX. The sequence is that of Ferrochelatase from Allorhizobium ampelinum (strain ATCC BAA-846 / DSM 112012 / S4) (Agrobacterium vitis (strain S4)).